Consider the following 132-residue polypeptide: Histone H2A.2 (132 aa).

Ser2 carries the post-translational modification N-acetylserine. Residues Lys5 and Lys8 each carry the N6-acetyllysine modification. N6-succinyllysine is present on residues Lys14 and Lys22. The residue at position 106 (Gln106) is an N5-methylglutamine. N6-malonyllysine is present on Lys120. A Glycyl lysine isopeptide (Lys-Gly) (interchain with G-Cter in SUMO) cross-link involves residue Lys127. Ser129 is modified (phosphoserine). Positions 129-130 match the [ST]-Q motif motif; it reads SQ.

The protein belongs to the histone H2A family. In terms of assembly, the nucleosome is a histone octamer containing two molecules each of H2A, H2B, H3 and H4 assembled in one H3-H4 heterotetramer and two H2A-H2B heterodimers. The octamer wraps approximately 147 bp of DNA. Interacts with NAP1. Phosphorylated to form H2AS128ph (gamma-H2A) in response to DNA double-strand breaks (DSBs) generated by exogenous genotoxic agents and by stalled replication forks. Phosphorylation is dependent on the DNA damage checkpoint kinases MEC1/ATR and TEL1/ATM, spreads on either side of a detected DSB site and may mark the surrounding chromatin for recruitment of proteins required for DNA damage signaling and repair. Gamma-H2A interacts with ARP4, a shared component of the NuA4 histone acetyltransferase complex and the INO80 and SWR1 chromatin remodeling complexes, and serves to recruit first NuA4, mediating histone H4 acetylation, and subsequently the INO80/SWR1 complexes, facilitating DNA resection, to DSB sites. Gamma-H2A is required for sequestering cohesin around the break site, which is important for efficient post-replicative double-strand break repair by homologous recombination, holding the damaged chromatid close to its undamaged sister template. Gamma-H2A is removed from the DNA prior to the strand invasion-primer extension step of the repair process and subsequently dephosphorylated by PPH3, a component of the histone H2A phosphatase complex (HTP-C). Dephosphorylation is necessary for efficient recovery from the DNA damage checkpoint. In terms of processing, N-acetylated by NAT4. Post-translationally, acetylated by ESA1, a component of the NuA4 histone acetyltransferase (HAT) complex, to form H2AK4ac and H2AK7ac. Glutamine methylation at Gln-106 (H2AQ105me) by NOP1 is specifically dedicated to polymerase I. It is present at 35S ribosomal DNA locus and impairs binding of the FACT complex. In terms of processing, sumoylated to from H2AK126su. May lead to transcriptional repression.

It is found in the nucleus. The protein resides in the chromosome. In terms of biological role, core component of nucleosome which plays a central role in DNA double strand break (DSB) repair. Nucleosomes wrap and compact DNA into chromatin, limiting DNA accessibility to the cellular machineries which require DNA as a template. Histones thereby play a central role in transcription regulation, DNA repair, DNA replication and chromosomal stability. DNA accessibility is regulated via a complex set of post-translational modifications of histones, also called histone code, and nucleosome remodeling. This is Histone H2A.2 (HTA2) from Saccharomyces cerevisiae (strain ATCC 204508 / S288c) (Baker's yeast).